The chain runs to 352 residues: Quinolinate synthase (352 aa).

Iminosuccinate-binding residues include His48 and Ser69. [4Fe-4S] cluster is bound at residue Cys114. Iminosuccinate contacts are provided by residues 140-142 (YAN) and Ser157. Cys201 serves as a coordination point for [4Fe-4S] cluster. Iminosuccinate is bound by residues 227-229 (HPE) and Thr244. Residue Cys298 coordinates [4Fe-4S] cluster.

This sequence belongs to the quinolinate synthase family. Type 1 subfamily. The cofactor is [4Fe-4S] cluster.

Its subcellular location is the cytoplasm. The catalysed reaction is iminosuccinate + dihydroxyacetone phosphate = quinolinate + phosphate + 2 H2O + H(+). The protein operates within cofactor biosynthesis; NAD(+) biosynthesis; quinolinate from iminoaspartate: step 1/1. Functionally, catalyzes the condensation of iminoaspartate with dihydroxyacetone phosphate to form quinolinate. The chain is Quinolinate synthase from Pseudomonas aeruginosa (strain UCBPP-PA14).